Here is a 404-residue protein sequence, read N- to C-terminus: tRNA pseudouridine(31) synthase (404 aa).

The active site involves Asp-168.

Belongs to the pseudouridine synthase RluA family.

It is found in the cytoplasm. Its subcellular location is the mitochondrion. The catalysed reaction is uridine(31) in tRNA = pseudouridine(31) in tRNA. In terms of biological role, catalyzes the formation of pseudouridine at position 31 in the psi GC loop of tRNAS. The sequence is that of tRNA pseudouridine(31) synthase (PUS6) from Saccharomyces cerevisiae (strain ATCC 204508 / S288c) (Baker's yeast).